Here is an 85-residue protein sequence, read N- to C-terminus: Large ribosomal subunit protein bL27 (85 aa).

The tract at residues 1–20 (MAHKKGGGTTRNGRDSESKR) is disordered.

Belongs to the bacterial ribosomal protein bL27 family.

This chain is Large ribosomal subunit protein bL27, found in Herminiimonas arsenicoxydans.